The primary structure comprises 315 residues: tRNA dimethylallyltransferase (315 aa).

10-17 (GPTAVGKT) lines the ATP pocket. 12–17 (TAVGKT) lines the substrate pocket. The interaction with substrate tRNA stretch occupies residues 35 to 38 (DSMQ).

It belongs to the IPP transferase family. Monomer. Mg(2+) is required as a cofactor.

It carries out the reaction adenosine(37) in tRNA + dimethylallyl diphosphate = N(6)-dimethylallyladenosine(37) in tRNA + diphosphate. In terms of biological role, catalyzes the transfer of a dimethylallyl group onto the adenine at position 37 in tRNAs that read codons beginning with uridine, leading to the formation of N6-(dimethylallyl)adenosine (i(6)A). The sequence is that of tRNA dimethylallyltransferase from Geobacillus kaustophilus (strain HTA426).